The sequence spans 185 residues: NOP protein chaperone 1 (185 aa).

Positions 1–40 are disordered; the sequence is MEVHGKPKASPSCSSPTRDSSGVPVSKELLTAGSDGRGGI. Low complexity predominate over residues 10-21; the sequence is SPSCSSPTRDSS. 2 positions are modified to phosphoserine: S34 and S66. The segment at 118 to 185 is disordered; that stretch reads FEMNQSDSKE…LDSPASKKKK (68 aa). The span at 143-152 shows a compositional bias: acidic residues; the sequence is SESEDEDDSI. S178 is modified (phosphoserine).

Interacts with NOP58, RUVBL1 and RUVBL2; the interactions are direct and NOPCHAP1 bridges the association of NOP58 with RUVBL1:RUVBL2 even in absence of snoRNAs. The interactions with RUVBL1 and RUVBL2 are disrupted upon ATP binding.

The protein resides in the nucleus. In terms of biological role, client-loading PAQosome/R2TP complex cofactor that selects NOP58 to promote box C/D small nucleolar ribonucleoprotein (snoRNP) assembly. Acts as a bridge between NOP58 and the R2TP complex via RUVBL1:RUVBL2. This chain is NOP protein chaperone 1, found in Homo sapiens (Human).